The chain runs to 337 residues: Ketol-acid reductoisomerase (NADP(+)) (337 aa).

Residues 3-183 (VEVFYDDDAD…GGTRAGAIRT (181 aa)) form the KARI N-terminal Rossmann domain. Residues 26-29 (YGSQ), S52, S54, and 84-87 (DTAQ) contribute to the NADP(+) site. Residue H109 is part of the active site. NADP(+) is bound at residue G135. The KARI C-terminal knotted domain occupies 184–329 (TFTEETETDL…SKLRGMMSWV (146 aa)). The Mg(2+) site is built by D192, E196, E228, and E232. S253 contacts substrate.

The protein belongs to the ketol-acid reductoisomerase family. The cofactor is Mg(2+).

It catalyses the reaction (2R)-2,3-dihydroxy-3-methylbutanoate + NADP(+) = (2S)-2-acetolactate + NADPH + H(+). It carries out the reaction (2R,3R)-2,3-dihydroxy-3-methylpentanoate + NADP(+) = (S)-2-ethyl-2-hydroxy-3-oxobutanoate + NADPH + H(+). Its pathway is amino-acid biosynthesis; L-isoleucine biosynthesis; L-isoleucine from 2-oxobutanoate: step 2/4. It functions in the pathway amino-acid biosynthesis; L-valine biosynthesis; L-valine from pyruvate: step 2/4. Involved in the biosynthesis of branched-chain amino acids (BCAA). Catalyzes an alkyl-migration followed by a ketol-acid reduction of (S)-2-acetolactate (S2AL) to yield (R)-2,3-dihydroxy-isovalerate. In the isomerase reaction, S2AL is rearranged via a Mg-dependent methyl migration to produce 3-hydroxy-3-methyl-2-ketobutyrate (HMKB). In the reductase reaction, this 2-ketoacid undergoes a metal-dependent reduction by NADPH to yield (R)-2,3-dihydroxy-isovalerate. The protein is Ketol-acid reductoisomerase (NADP(+)) of Salinispora arenicola (strain CNS-205).